Reading from the N-terminus, the 41-residue chain is Pathogenesis-related protein (41 aa).

This sequence belongs to the CRISP family.

Its function is as follows. Probably involved in the defense reaction of plants against pathogens. The chain is Pathogenesis-related protein from Cucumis melo (Muskmelon).